Reading from the N-terminus, the 405-residue chain is Deoxyguanosinetriphosphate triphosphohydrolase-like protein (405 aa).

The HD domain maps to Arg-75–Asn-219.

It belongs to the dGTPase family. Type 2 subfamily.

In Rhizobium etli (strain CIAT 652), this protein is Deoxyguanosinetriphosphate triphosphohydrolase-like protein.